We begin with the raw amino-acid sequence, 67 residues long: uncharacterized protein (67 aa).

The next 2 membrane-spanning stretches (helical) occupy residues 10-32 (NLSH…TAFI) and 44-66 (ATLT…MGQW).

The protein resides in the cell membrane. This is an uncharacterized protein from Archaeoglobus fulgidus (strain ATCC 49558 / DSM 4304 / JCM 9628 / NBRC 100126 / VC-16).